Consider the following 417-residue polypeptide: Phosphoglycerate kinase (417 aa).

Val-23, Asp-24, Phe-25, Asn-26, Gln-38, Arg-39, Ser-62, His-63, Gly-65, Arg-66, Leu-121, Arg-122, His-169, and Arg-170 together coordinate (2R)-3-phosphoglycerate. Gly-213 is a binding site for ADP. Gly-213 serves as a coordination point for CDP. AMP contacts are provided by Ala-214 and Lys-215. An ATP-binding site is contributed by Ala-214. Ala-214 contacts Mg(2+). Residue Asp-218 participates in CDP binding. Position 218 (Asp-218) interacts with Mg(2+). Position 219 (Lys-219) interacts with AMP. Lys-219 is an ATP binding site. Residue Gly-237 participates in ADP binding. Gly-237 contacts CDP. Residues Gly-238 and Gly-312 each contribute to the AMP site. ATP-binding residues include Gly-238 and Gly-312. Positions 337 and 342 each coordinate CDP. An ADP-binding site is contributed by Phe-342. Glu-343 provides a ligand contact to AMP. ATP-binding residues include Glu-343, Asp-374, and Thr-375. Position 374 (Asp-374) interacts with Mg(2+).

It belongs to the phosphoglycerate kinase family. Monomer. Requires Mg(2+) as cofactor.

Its subcellular location is the cytoplasm. The protein localises to the mitochondrion. The enzyme catalyses (2R)-3-phosphoglycerate + ATP = (2R)-3-phospho-glyceroyl phosphate + ADP. It functions in the pathway carbohydrate degradation; glycolysis; pyruvate from D-glyceraldehyde 3-phosphate: step 2/5. Catalyzes one of the two ATP producing reactions in the glycolytic pathway via the reversible conversion of 1,3-diphosphoglycerate to 3-phosphoglycerate. Both L- and D- forms of purine and pyrimidine nucleotides can be used as substrates, but the activity is much lower on pyrimidines. Negatively regulates the biosynthesis of acetyl-CoA from pyruvate in the mitochondrion. The chain is Phosphoglycerate kinase (PGK1) from Candida maltosa (Yeast).